We begin with the raw amino-acid sequence, 358 residues long: tRNA (guanine-N(7)-)-methyltransferase (358 aa).

Residues M1 to D29 form a disordered region. Residues G99 and E122 to I123 contribute to the S-adenosyl-L-methionine site. Residues T151 to T186 are compositionally biased toward low complexity. The disordered stretch occupies residues T151 to T194. S-adenosyl-L-methionine is bound by residues N209–T210 and C229. D232 is a catalytic residue. Residue T330–E332 participates in S-adenosyl-L-methionine binding.

It belongs to the class I-like SAM-binding methyltransferase superfamily. TrmB family. Forms a complex with trm82.

The protein resides in the nucleus. It catalyses the reaction guanosine(46) in tRNA + S-adenosyl-L-methionine = N(7)-methylguanosine(46) in tRNA + S-adenosyl-L-homocysteine. The protein operates within tRNA modification; N(7)-methylguanine-tRNA biosynthesis. Its function is as follows. Catalyzes the formation of N(7)-methylguanine at position 46 (m7G46) in tRNA. The sequence is that of tRNA (guanine-N(7)-)-methyltransferase (trm8) from Aspergillus fumigatus (strain ATCC MYA-4609 / CBS 101355 / FGSC A1100 / Af293) (Neosartorya fumigata).